A 160-amino-acid polypeptide reads, in one-letter code: MSKIAVYPGSFDPITMGHVDIINRISPLYDEVIVLVAQSSQKQSMFSVEERKTLIEKALSHLKNVKVDIFGGLTVEYMKKAKAQVIVRGLRAVSDFEYEMTMANMNRKLAPDFETLLVFASPEFYYISSRGVKEVAINGGALKGLVPDVVVEAMENKIRK.

Ser-10 provides a ligand contact to substrate. ATP is bound by residues 10 to 11 (SF) and His-18. Substrate is bound by residues Lys-42, Thr-74, and Arg-88. Residues 89-91 (GLR), Glu-99, and 124-130 (FYYISSR) each bind ATP.

This sequence belongs to the bacterial CoaD family. As to quaternary structure, homohexamer. The cofactor is Mg(2+).

It is found in the cytoplasm. It carries out the reaction (R)-4'-phosphopantetheine + ATP + H(+) = 3'-dephospho-CoA + diphosphate. Its pathway is cofactor biosynthesis; coenzyme A biosynthesis; CoA from (R)-pantothenate: step 4/5. In terms of biological role, reversibly transfers an adenylyl group from ATP to 4'-phosphopantetheine, yielding dephospho-CoA (dPCoA) and pyrophosphate. This Bdellovibrio bacteriovorus (strain ATCC 15356 / DSM 50701 / NCIMB 9529 / HD100) protein is Phosphopantetheine adenylyltransferase.